Here is a 236-residue protein sequence, read N- to C-terminus: Large ribosomal subunit protein uL3 (236 aa).

The segment at 139–163 (ARDSSTTHEHHRHVGAIGQRKTPGK) is disordered.

This sequence belongs to the universal ribosomal protein uL3 family. In terms of assembly, part of the 50S ribosomal subunit. Forms a cluster with proteins L14 and L19.

Functionally, one of the primary rRNA binding proteins, it binds directly near the 3'-end of the 23S rRNA, where it nucleates assembly of the 50S subunit. This chain is Large ribosomal subunit protein uL3, found in Anaeromyxobacter sp. (strain Fw109-5).